The chain runs to 162 residues: NADH-quinone oxidoreductase subunit I (162 aa).

4Fe-4S ferredoxin-type domains follow at residues 54–83 (RRYE…IESE) and 93–122 (TRYD…ETQI). [4Fe-4S] cluster-binding residues include Cys-63, Cys-66, Cys-69, Cys-73, Cys-102, Cys-105, Cys-108, and Cys-112.

This sequence belongs to the complex I 23 kDa subunit family. As to quaternary structure, NDH-1 is composed of 14 different subunits. Subunits NuoA, H, J, K, L, M, N constitute the membrane sector of the complex. It depends on [4Fe-4S] cluster as a cofactor.

It is found in the cell inner membrane. The catalysed reaction is a quinone + NADH + 5 H(+)(in) = a quinol + NAD(+) + 4 H(+)(out). Its function is as follows. NDH-1 shuttles electrons from NADH, via FMN and iron-sulfur (Fe-S) centers, to quinones in the respiratory chain. The immediate electron acceptor for the enzyme in this species is believed to be ubiquinone. Couples the redox reaction to proton translocation (for every two electrons transferred, four hydrogen ions are translocated across the cytoplasmic membrane), and thus conserves the redox energy in a proton gradient. This is NADH-quinone oxidoreductase subunit I from Burkholderia cenocepacia (strain HI2424).